A 1050-amino-acid polypeptide reads, in one-letter code: MSDPAGNRPKTEKELKKEAEKAAKLAKFEEKQKKLAEKKAAASDKPVKEAKAKKEQTVEAAEPVDQTPTGQRKKIDGEIPAAYFPGYVESGWYSWWEKEGFFKPEYIDKLNPGSNPADSFTVCIPPPNVTGNLHVGHALATTVEDTITRFNRMHGKRTLFNPGCDHAGIATQVVVEKRLKRERGLTRHDLGRDRFNQEVWHWKNEKGDVIYDQFRKLGASVDWDRAVFTMDPKMCRAVTEAFIRMHESGTIYRSNRLVNWSCALRSAISDIEVDKKELTGSTLIAVPGYDKKIEFGVLNSFAYKIQGSDEEIVVSTTRIETMLGDSGVAVHPDDQRYKHLVGKQCIHPFIPTRNLPIFADSFVEMEFGTGAVKITPAHDHNDYEVGIRQNLPFHNCITDDGLISQGCGEFSGMKRFDARTAVIEALKEKGLYRGKEDNPMVVPTCSRSKDVIEPILKPQWYVKCAHMAEKAVAAVANGDLQIIPEFHKATWNRWLESSRDWCISRQLWWGHRIPAYYISFADGREQPLPEENYWVSARTEQEALAKAAQKFQVPEAEILLKWDEDVLDTWFSSGMWPFAVFGWPDATKDMDLFFPGAVLETGHDILFFWVARMVFMAQELTGKLPFKEILLHAMIRDAHGRKMSKSLGNVIDPLDVIRGISLNDLQAQLLGGNLDEKEIAVAKEGQARDYPDGIPECGVDALRFALLSYTSQGRDINLDVLRVHGYRKFCNKLWQVVRFALARISDKPEQKPTFEINLKSATPTDLWILSRLAKAVKETNEALKAYNFTQATTVTYNFWLYDFCDVYVETIKPVLYGDNTTLRQVAISVLHKCIDTGLRLISPLMPFISEELWQRMPRLDDSDYTSPSIIVAQYPLTQKYEKYQNEKLEAAFEFAQELIGKVRSLRADYDLKKTKITMQILSETPEDESMLNDISAVITTLTFSEKVSILNKCESDKIEKGSAHIACGGRCQVYINLTGIIDVPKEIEKLGAKLQKNQISVKKIGDIQSSADYEQKVPVDIRALDQEKKATLEKEIENITAAIAQLKALN.

Basic and acidic residues predominate over residues 37 to 57 (EKKAAASDKPVKEAKAKKEQT). The disordered stretch occupies residues 37 to 72 (EKKAAASDKPVKEAKAKKEQTVEAAEPVDQTPTGQR). The 'HIGH' region motif lies at 127–137 (PNVTGNLHVGH). Residues 642–646 (KMSKS) carry the 'KMSKS' region motif. Lysine 645 provides a ligand contact to ATP.

This sequence belongs to the class-I aminoacyl-tRNA synthetase family.

The enzyme catalyses tRNA(Val) + L-valine + ATP = L-valyl-tRNA(Val) + AMP + diphosphate. This chain is Valine--tRNA ligase, found in Caenorhabditis elegans.